An 89-amino-acid chain; its full sequence is NADH-ubiquinone oxidoreductase chain 4L (89 aa).

A run of 3 helical transmembrane segments spans residues 1–21, 22–42, and 57–77; these read MNLT…NRKN, IILM…LILV, and IYII…LVAF.

This sequence belongs to the complex I subunit 4L family.

It is found in the mitochondrion membrane. It carries out the reaction a ubiquinone + NADH + 5 H(+)(in) = a ubiquinol + NAD(+) + 4 H(+)(out). Its function is as follows. Core subunit of the mitochondrial membrane respiratory chain NADH dehydrogenase (Complex I) that is believed to belong to the minimal assembly required for catalysis. Complex I functions in the transfer of electrons from NADH to the respiratory chain. The immediate electron acceptor for the enzyme is believed to be ubiquinone. This chain is NADH-ubiquinone oxidoreductase chain 4L (ND4L), found in Cryphonectria parasitica (Chestnut blight fungus).